Consider the following 176-residue polypeptide: R-phycoerythrin beta chain (176 aa).

Cysteine 50 and cysteine 61 together coordinate phycourobilin. Asparagine 72 carries the post-translational modification N4-methylasparagine. Residues cysteine 82 and cysteine 158 each contribute to the (2R,3E)-phycoerythrobilin site.

This sequence belongs to the phycobiliprotein family. As to quaternary structure, heterodimer of an alpha and a beta chain. Post-translationally, contains two covalently linked phycoerythrobilin chromophores and one covalently linked phycourobilin chromophore.

Its subcellular location is the plastid. The protein localises to the chloroplast thylakoid membrane. Its function is as follows. Light-harvesting photosynthetic bile pigment-protein from the phycobiliprotein complex. In Aglaothamnion neglectum (Red alga), this protein is R-phycoerythrin beta chain (cpeB).